The chain runs to 387 residues: 1-hydroxy-2-naphthoate 1,2-dioxygenasee (387 aa).

2 consecutive Cupin type-2 domains span residues 103 to 171 and 271 to 337; these read FQLV…VWLD and VQRL…VLLF.

Homohexamer. Fe(2+) serves as cofactor.

The catalysed reaction is 1-hydroxy-2-naphthoate + O2 = (3Z)-4-(2-carboxyphenyl)-2-oxobut-3-enoate + H(+). Dioxygenase involved in phenanthrene catabolism by mediating cleavage of 1-hydroxy-2-naphthoate. The polypeptide is 1-hydroxy-2-naphthoate 1,2-dioxygenasee (phdI) (Nocardioides sp. (strain KP7)).